The primary structure comprises 464 residues: Citrate synthase, mitochondrial (464 aa).

Residues 1–27 (MALLTAAARLFGAKNASCLVLAARHAS) constitute a mitochondrion transit peptide. Residues 2-21 (ALLTAAARLFGAKNASCLVL) carry the SIFI-degron motif. Position 76 is an N6-acetyllysine; alternate (lysine 76). Position 76 is an N6-succinyllysine; alternate (lysine 76). 2 positions are modified to N6-succinyllysine: lysine 103 and lysine 193. Serine 226 bears the Phosphoserine mark. The active site involves histidine 301. 2 positions are modified to N6-acetyllysine; alternate: lysine 321 and lysine 327. N6-succinyllysine; alternate is present on residues lysine 321 and lysine 327. The active site involves histidine 347. Arginine 356 is a binding site for oxaloacetate. An N6-acetyllysine; alternate modification is found at lysine 375. Lysine 375 carries the post-translational modification N6-succinyllysine; alternate. An N6-acetyllysine modification is found at lysine 382. Residue lysine 393 is modified to N6-acetyllysine; alternate. Lysine 393 bears the N6-succinyllysine; alternate mark. At lysine 395 the chain carries N6,N6,N6-trimethyllysine. The active site involves aspartate 402. Oxaloacetate contacts are provided by arginine 428 and arginine 448. Lysine 450 carries the post-translational modification N6-succinyllysine. Residue lysine 459 is modified to N6-acetyllysine; alternate. The residue at position 459 (lysine 459) is an N6-succinyllysine; alternate.

It belongs to the citrate synthase family. Homodimer. Methylated. Trimethylation at Lys-395 by CSKMT decreases citrate synthase activity. In terms of processing, in response to mitochondrial stress, the precursor protein is ubiquitinated by the SIFI complex in the cytoplasm before mitochondrial import, leading to its degradation. Within the SIFI complex, UBR4 initiates ubiquitin chain that are further elongated or branched by KCMF1.

Its subcellular location is the mitochondrion matrix. It carries out the reaction oxaloacetate + acetyl-CoA + H2O = citrate + CoA + H(+). Its pathway is carbohydrate metabolism; tricarboxylic acid cycle; isocitrate from oxaloacetate: step 1/2. Key enzyme of the Krebs tricarboxylic acid cycle which catalyzes the synthesis of citrate from acetyl coenzyme A and oxaloacetate. This Sus scrofa (Pig) protein is Citrate synthase, mitochondrial (CS).